A 901-amino-acid chain; its full sequence is Probable inorganic carbon transporter subunit DabA (901 aa).

Zn(2+) is bound by residues C424, D426, H606, and C621.

It belongs to the inorganic carbon transporter (TC 9.A.2) DabA family. In terms of assembly, forms a complex with DabB. It depends on Zn(2+) as a cofactor.

It localises to the cell membrane. Its function is as follows. Part of an energy-coupled inorganic carbon pump. This is Probable inorganic carbon transporter subunit DabA from Staphylococcus aureus (strain USA300).